A 463-amino-acid polypeptide reads, in one-letter code: Sodium-coupled neutral amino acid transporter 7 (463 aa).

Serine 28 bears the Phosphoserine mark. Helical transmembrane passes span 56-76, 82-102, 130-150, 179-199, 206-226, 240-260, 283-303, 320-340, 372-392, 396-416, and 429-449; these read AVFIVVNACLGAGLLNFPAAF, VAAGIALQMGMLVFIISGLVI, LCEIAIAVYTFGTCIAFLIII, FTISLTAFLFILPLSIPKEIG, SLSVVGTWYVTAIVIIKYIWP, ASWMAVFNAMPTICFGFQCHV, AAMVIALAVYMGTGICGFLTF, VAVAVARAFIILSVLTSYPIL, VLQTLVWFLLTLLLALFIPDI, ISVIGGLAACFIFIFPGLCLI, and ASWWALVSYGVLLVTLGAFIF.

Belongs to the amino acid/polyamine transporter 2 family. In terms of assembly, interacts with the mTORC1 complex; this interaction mediates the recruitment of mTORC1 to the lysosome and its subsequent activation.

It is found in the lysosome membrane. The protein resides in the cell projection. Its subcellular location is the axon. It carries out the reaction L-asparagine(in) + Na(+)(in) = L-asparagine(out) + Na(+)(out). It catalyses the reaction L-glutamine(in) + Na(+)(in) = L-glutamine(out) + Na(+)(out). Symporter that selectively cotransports sodium ions and amino acids, such as L-glutamine and L-asparagine from the lysosome into the cytoplasm and may participates in mTORC1 activation. The transport activity requires an acidic lysosomal lumen. The polypeptide is Sodium-coupled neutral amino acid transporter 7 (Rattus norvegicus (Rat)).